The following is a 245-amino-acid chain: Actin-like protein 10 (245 aa).

Belongs to the actin family.

The polypeptide is Actin-like protein 10 (ACTL10) (Homo sapiens (Human)).